Consider the following 502-residue polypeptide: Histidine--tRNA ligase (502 aa).

The protein belongs to the class-II aminoacyl-tRNA synthetase family. As to quaternary structure, homodimer.

The protein resides in the cytoplasm. It carries out the reaction tRNA(His) + L-histidine + ATP = L-histidyl-tRNA(His) + AMP + diphosphate + H(+). The polypeptide is Histidine--tRNA ligase (Brucella suis (strain ATCC 23445 / NCTC 10510)).